Reading from the N-terminus, the 217-residue chain is MOB kinase activator 3A (217 aa).

4 residues coordinate Zn(2+): cysteine 83, cysteine 88, histidine 165, and histidine 170.

Belongs to the MOB1/phocein family.

In terms of biological role, may regulate the activity of kinases. The chain is MOB kinase activator 3A (Mob3a) from Mus musculus (Mouse).